Consider the following 244-residue polypeptide: Glucosamine-6-phosphate deaminase (244 aa).

The Proton acceptor; for enolization step role is filled by Asp67. Asn136 acts as the For ring-opening step in catalysis. Residue His138 is the Proton acceptor; for ring-opening step of the active site. Catalysis depends on Glu143, which acts as the For ring-opening step.

It belongs to the glucosamine/galactosamine-6-phosphate isomerase family. NagB subfamily.

The enzyme catalyses alpha-D-glucosamine 6-phosphate + H2O = beta-D-fructose 6-phosphate + NH4(+). The protein operates within amino-sugar metabolism; N-acetylneuraminate degradation; D-fructose 6-phosphate from N-acetylneuraminate: step 5/5. Functionally, catalyzes the reversible isomerization-deamination of glucosamine 6-phosphate (GlcN6P) to form fructose 6-phosphate (Fru6P) and ammonium ion. In Clostridium botulinum (strain 657 / Type Ba4), this protein is Glucosamine-6-phosphate deaminase.